Here is a 433-residue protein sequence, read N- to C-terminus: Xylose isomerase (433 aa).

Asp305 and Asp307 together coordinate Mg(2+).

The protein belongs to the xylose isomerase family. As to quaternary structure, homotetramer. Mg(2+) serves as cofactor.

It localises to the cytoplasm. It catalyses the reaction alpha-D-xylose = alpha-D-xylulofuranose. This is Xylose isomerase from Cereibacter sphaeroides (strain KD131 / KCTC 12085) (Rhodobacter sphaeroides).